The following is a 106-amino-acid chain: Biogenesis of lysosome-related organelles complex 1 subunit 4 (106 aa).

Residues 53–106 (THSEGLSEQLKMTEKNILEMENLFDQIDQLCLFVQKAKSDLDKLEKLYNVVDRQ) are a coiled coil.

The protein belongs to the BLOC1S4 family. Component of the biogenesis of lysosome-related organelles complex-1 (BLOC-1) composed at least of blos-1, blos-2, blos-4, dsbn-1, glo-2, mutd-1 and snpn-1. Interacts with glo-2.

In terms of biological role, component of the biogenesis of lysosome-related organelles complex-1 (BLOC-1) involved in gut granule biogenesis. This Caenorhabditis elegans protein is Biogenesis of lysosome-related organelles complex 1 subunit 4 (blos-4).